The following is a 331-amino-acid chain: Biotin synthase (331 aa).

A Radical SAM core domain is found at Pro-52–Arg-277. The [4Fe-4S] cluster site is built by Cys-67, Cys-71, and Cys-74. The [2Fe-2S] cluster site is built by Cys-110, Cys-143, Cys-202, and Arg-272.

It belongs to the radical SAM superfamily. Biotin synthase family. In terms of assembly, homodimer. It depends on [4Fe-4S] cluster as a cofactor. The cofactor is [2Fe-2S] cluster.

It catalyses the reaction (4R,5S)-dethiobiotin + (sulfur carrier)-SH + 2 reduced [2Fe-2S]-[ferredoxin] + 2 S-adenosyl-L-methionine = (sulfur carrier)-H + biotin + 2 5'-deoxyadenosine + 2 L-methionine + 2 oxidized [2Fe-2S]-[ferredoxin]. Its pathway is cofactor biosynthesis; biotin biosynthesis; biotin from 7,8-diaminononanoate: step 2/2. Functionally, catalyzes the conversion of dethiobiotin (DTB) to biotin by the insertion of a sulfur atom into dethiobiotin via a radical-based mechanism. The sequence is that of Biotin synthase from Mycobacterium sp. (strain JLS).